We begin with the raw amino-acid sequence, 191 residues long: Transposon Tn1546 resolvase (191 aa).

Residues 2–138 form the Resolvase/invertase-type recombinase catalytic domain; the sequence is RKIGYIRVSS…EGIELAKKEG (137 aa). S10 functions as the O-(5'-phospho-DNA)-serine intermediate in the catalytic mechanism. The segment at residues 168–187 is a DNA-binding region (H-T-H motif); sequence VNQICEITNVSRASLYRKLS.

It belongs to the site-specific recombinase resolvase family.

Its function is as follows. Resolvase catalyzes the resolution (a site-specific recombination) of the cointegrated replicon to yield the final transposition products. This is Transposon Tn1546 resolvase from Enterococcus faecium (Streptococcus faecium).